Consider the following 159-residue polypeptide: Nucleotide-binding protein Pmen_0939 (159 aa).

The protein belongs to the YajQ family.

Functionally, nucleotide-binding protein. This is Nucleotide-binding protein Pmen_0939 from Ectopseudomonas mendocina (strain ymp) (Pseudomonas mendocina).